The following is a 389-amino-acid chain: Na(+)/H(+) antiporter NhaA 1 (389 aa).

A run of 11 helical transmembrane segments spans residues 14–34, 47–67, 87–107, 117–137, 146–166, 171–191, 197–217, 252–272, 280–300, 321–341, and 356–376; these read AGGILLVIAAAIAMVIANSPL, FGMSVSHWINDGLMAIFFLLI, IFPAIAAVGGMLAPALIYVAF, GWAIPAATDIAFALGIMALLG, VFLLALAIIDDLGVVVIIALF, LSTLALTVGFAMTGVLFMLNA, LIWYIVVGFILWVAVLKSGVH, VAFAILPVFAFANAGISLEGV, MLPLGIALGLLVGKPLGIFTF, IFAVSVLCGIGFTMSIFISSL, and LGILMGSTTAAVLGYFLLHVS.

This sequence belongs to the NhaA Na(+)/H(+) (TC 2.A.33) antiporter family.

It localises to the cell inner membrane. It catalyses the reaction Na(+)(in) + 2 H(+)(out) = Na(+)(out) + 2 H(+)(in). Its function is as follows. Na(+)/H(+) antiporter that extrudes sodium in exchange for external protons. The chain is Na(+)/H(+) antiporter NhaA 1 from Vibrio vulnificus (strain CMCP6).